A 160-amino-acid chain; its full sequence is ATP synthase subunit b (160 aa).

The helical transmembrane segment at 15-35 threads the bilayer; that stretch reads LAIVIGVLFWFLRGFLGGILE.

This sequence belongs to the ATPase B chain family. As to quaternary structure, F-type ATPases have 2 components, F(1) - the catalytic core - and F(0) - the membrane proton channel. F(1) has five subunits: alpha(3), beta(3), gamma(1), delta(1), epsilon(1). F(0) has four main subunits: a(1), b(1), b'(1) and c(10-14). The alpha and beta chains form an alternating ring which encloses part of the gamma chain. F(1) is attached to F(0) by a central stalk formed by the gamma and epsilon chains, while a peripheral stalk is formed by the delta, b and b' chains.

It localises to the cellular thylakoid membrane. Functionally, f(1)F(0) ATP synthase produces ATP from ADP in the presence of a proton or sodium gradient. F-type ATPases consist of two structural domains, F(1) containing the extramembraneous catalytic core and F(0) containing the membrane proton channel, linked together by a central stalk and a peripheral stalk. During catalysis, ATP synthesis in the catalytic domain of F(1) is coupled via a rotary mechanism of the central stalk subunits to proton translocation. Component of the F(0) channel, it forms part of the peripheral stalk, linking F(1) to F(0). In Synechococcus sp. (strain CC9902), this protein is ATP synthase subunit b.